The chain runs to 162 residues: Caveolin-2 (162 aa).

Over 1–86 (MGLETEKTDV…FEISKYVMYK (86 aa)) the chain is Cytoplasmic. A Phosphotyrosine; by SRC modification is found at Tyr19. Phosphoserine occurs at positions 20 and 23. The residue at position 27 (Tyr27) is a Phosphotyrosine; by SRC. A Phosphoserine modification is found at Ser36. The helical intramembrane region spans 87–107 (FLTVFLAIPLAFLAGILFATL). At 108–162 (SCLHIWIIMPFVKTCLMVLPSVQTIWKSVTDAIVAPLCTSIGRSFSSVSLQLSQD) the chain is on the cytoplasmic side.

This sequence belongs to the caveolin family. Monomer or homodimer. Interacts with CAV1; the interaction forms a stable heterooligomeric complex that is required for targeting to lipid rafts and for caveolae formation. Tyrosine phosphorylated forms do not form heterooligomers with the Tyr-19-phosphorylated form existing as a monomer or dimer, and the Tyr-27-form as a monomer only. Interacts (tyrosine phosphorylated form) with the SH2 domain-containing proteins, RASA1, NCK1 and SRC. Interacts (tyrosine phosphorylated form) with INSR, the interaction (Tyr-27-phosphorylated form) is increased on insulin stimulation. Interacts (Tyr-19 phosphorylated form) with MAPK1 (phosphorylated form); the interaction, promoted by insulin, leads to nuclear location and MAPK1 activation. Interacts with STAT3; the interaction is increased on insulin-induced tyrosine phosphorylation leading to STAT activation. Phosphorylated on serine and tyrosine residues. CAV1 promotes phosphorylation on Ser-23 which then targets the complex to the plasma membrane, lipid rafts and caveolae. Phosphorylation on Ser-36 appears to modulate mitosis in endothelial cells. Phosphorylation on both Tyr-19 and Tyr-27 is required for insulin-induced 'Ser-727' phosphorylation of STAT3 and its activation. Phosphorylation on Tyr-19 is required for insulin-induced phosphorylation of MAPK1 and DNA binding of STAT3. Tyrosine phosphorylation is induced by both EGF and insulin (By. similarity).

Its subcellular location is the nucleus. The protein resides in the cytoplasm. The protein localises to the golgi apparatus membrane. It is found in the cell membrane. It localises to the membrane. Its subcellular location is the caveola. Its function is as follows. May act as a scaffolding protein within caveolar membranes. Interacts directly with G-protein alpha subunits and can functionally regulate their activity. Acts as an accessory protein in conjunction with CAV1 in targeting to lipid rafts and driving caveolae formation. The Ser-36 phosphorylated form has a role in modulating mitosis in endothelial cells. Positive regulator of cellular mitogenesis of the MAPK signaling pathway. Required for the insulin-stimulated nuclear translocation and activation of MAPK1 and STAT3, and the subsequent regulation of cell cycle progression. In Aotus nancymaae (Ma's night monkey), this protein is Caveolin-2 (CAV2).